We begin with the raw amino-acid sequence, 848 residues long: Adenylate cyclase (848 aa).

Residues 1–535 (MYLYIETLKQ…DVSHHFPLRL (535 aa)) are catalytic. The tract at residues 541–848 (KALYSPCEIR…DTPLLQQYFS (308 aa)) is regulatory. H609 carries the post-translational modification Phosphohistidine; by CRR.

Belongs to the adenylyl cyclase class-1 family.

Its subcellular location is the cytoplasm. It catalyses the reaction ATP = 3',5'-cyclic AMP + diphosphate. This is Adenylate cyclase (cyaA) from Escherichia coli O157:H7.